Consider the following 337-residue polypeptide: Glyceraldehyde-3-phosphate dehydrogenase 1, cytosolic (337 aa).

Residues 13 to 14 (RI), aspartate 35, and arginine 82 contribute to the NAD(+) site. D-glyceraldehyde 3-phosphate contacts are provided by residues 153–155 (SCT), threonine 184, 213–214 (TG), and arginine 236. The Nucleophile role is filled by cysteine 154. An NAD(+)-binding site is contributed by asparagine 318.

This sequence belongs to the glyceraldehyde-3-phosphate dehydrogenase family. Homotetramer.

It is found in the cytoplasm. The catalysed reaction is D-glyceraldehyde 3-phosphate + phosphate + NAD(+) = (2R)-3-phospho-glyceroyl phosphate + NADH + H(+). It functions in the pathway carbohydrate degradation; glycolysis; pyruvate from D-glyceraldehyde 3-phosphate: step 1/5. Functionally, key enzyme in glycolysis that catalyzes the first step of the pathway by converting D-glyceraldehyde 3-phosphate (G3P) into 3-phospho-D-glyceroyl phosphate. Essential for the maintenance of cellular ATP levels and carbohydrate metabolism. The sequence is that of Glyceraldehyde-3-phosphate dehydrogenase 1, cytosolic (GAPC) from Hordeum vulgare (Barley).